Consider the following 203-residue polypeptide: MIAYIHGKLLEATDKSCIILTPGGVGYELFLTLSAISTLPESGSDVTFYVHSVIREDAFDLYGFPCFDDREVFRTLISVDRLGPKKALAILSQFGPKDLQDLVFREDVKTLSIVPGIGPKSARQILWSLKDKMETLKSATVRSGACPVEGDRSEFLDALSGLRNLGYGDDEVRDFLKDIFDEEPDLDAGGAIRVALKKISQNK.

Positions 1–65 are domain I; it reads MIAYIHGKLL…EDAFDLYGFP (65 aa). The tract at residues 66–144 is domain II; that stretch reads CFDDREVFRT…TLKSATVRSG (79 aa). A flexible linker region spans residues 145–155; the sequence is ACPVEGDRSEF. The domain III stretch occupies residues 155 to 203; it reads FLDALSGLRNLGYGDDEVRDFLKDIFDEEPDLDAGGAIRVALKKISQNK.

The protein belongs to the RuvA family. As to quaternary structure, homotetramer. Forms an RuvA(8)-RuvB(12)-Holliday junction (HJ) complex. HJ DNA is sandwiched between 2 RuvA tetramers; dsDNA enters through RuvA and exits via RuvB. An RuvB hexamer assembles on each DNA strand where it exits the tetramer. Each RuvB hexamer is contacted by two RuvA subunits (via domain III) on 2 adjacent RuvB subunits; this complex drives branch migration. In the full resolvosome a probable DNA-RuvA(4)-RuvB(12)-RuvC(2) complex forms which resolves the HJ.

Its subcellular location is the cytoplasm. Its function is as follows. The RuvA-RuvB-RuvC complex processes Holliday junction (HJ) DNA during genetic recombination and DNA repair, while the RuvA-RuvB complex plays an important role in the rescue of blocked DNA replication forks via replication fork reversal (RFR). RuvA specifically binds to HJ cruciform DNA, conferring on it an open structure. The RuvB hexamer acts as an ATP-dependent pump, pulling dsDNA into and through the RuvAB complex. HJ branch migration allows RuvC to scan DNA until it finds its consensus sequence, where it cleaves and resolves the cruciform DNA. The protein is Holliday junction branch migration complex subunit RuvA of Maridesulfovibrio salexigens (strain ATCC 14822 / DSM 2638 / NCIMB 8403 / VKM B-1763) (Desulfovibrio salexigens).